The primary structure comprises 466 residues: Alpha-1A adrenergic receptor (466 aa).

Residues 1–25 (MVFLSGNASDSSNCTQPPAPVNIPK) are Extracellular-facing. 2 N-linked (GlcNAc...) asparagine glycosylation sites follow: Asn-7 and Asn-13. A helical transmembrane segment spans residues 26-51 (AILLGVILGVLILFGVPGNILVILSV). At 52-63 (ACHRHLHSVTHY) the chain is on the cytoplasmic side. Residues 64–89 (YIVNLAVADLLLTSTVLPFSAIFEIL) form a helical membrane-spanning segment. The Extracellular segment spans residues 90–99 (GYWAFGRVFC). Residues 100–122 (NIWAAVDVLCCTASIMSLCIISI) traverse the membrane as a helical segment. Residues 123–143 (DRYIGVSYPLRYPTIVTQRRG) lie on the Cytoplasmic side of the membrane. A helical membrane pass occupies residues 144–168 (LRALLCLWALSLVISIGPLFGWRQP). At 169-181 (APQDETICQINED) the chain is on the extracellular side. Residues 182 to 205 (PSYVLFSALGSFYVPLAIILVMYC) form a helical membrane-spanning segment. At 206–272 (RVYVVAKRES…KFSREKKAAK (67 aa)) the chain is on the cytoplasmic side. The helical transmembrane segment at 273–297 (TLGIVVGCFVLCWLPFFLVMPIGSF) threads the bilayer. Residues 298–304 (FPDFKPS) lie on the Extracellular side of the membrane. A helical transmembrane segment spans residues 305-329 (ETVFKIVFWLGYLNSCINPIIYPCS). The Cytoplasmic portion of the chain corresponds to 330 to 466 (SQEFKKAFQN…ISLSENGEEV (137 aa)). Positions 334–349 (KKAFQNVLKIQCLRRK) match the Nuclear localization signal motif. A lipid anchor (S-palmitoyl cysteine) is attached at Cys-345.

Belongs to the G-protein coupled receptor 1 family. Adrenergic receptor subfamily. ADRA1A sub-subfamily. As to quaternary structure, homo- and heterooligomer. Heterooligomerizes with ADRA1B homooligomers in cardiac myocytes. Interacts with CAVIN4.

The protein resides in the nucleus membrane. Its subcellular location is the cell membrane. It localises to the cytoplasm. It is found in the membrane. The protein localises to the caveola. Functionally, this alpha-adrenergic receptor mediates its action by association with G proteins that activate a phosphatidylinositol-calcium second messenger system. Its effect is mediated by G(q) and G(11) proteins. Nuclear ADRA1A-ADRA1B heterooligomers regulate phenylephrine (PE)-stimulated ERK signaling in cardiac myocytes. This is Alpha-1A adrenergic receptor (ADRA1A) from Cavia porcellus (Guinea pig).